Reading from the N-terminus, the 647-residue chain is MIKITFPDGAVREFESGVTTFDIAESISKSLAKKALAGKFNDQLIDTTRAIEEDGSIEIVTPDHKDAYEVLRHSAAHLFAQAAKRLFPNLHLGVGPAIAEGFYYDTDNAEGQISNEDLPRIEAEMQKIVTENYPCIREEVTKEEALELFKDDPYKVELINEHAGAGLTVYRQGEFVDLCRGPHVPSTGRIQVFHLLNVAGAYWRGNSDNNMMQRIYGTAWFDKKDLKAYLTRLEEAKERDHRKLGKELDLFMISQEVGQGLPFWLPDGATIRRTLERYITDKELASGYQHVYTPPLASVELYKTSGHWDHYQEDMFPVMDMGDGEEFVLRPMNCPHHIQVYKNHVRSYRELPIRIAELGMMHRYEKSGALSGLQRVREMTLNDGHIFVTPEQIQEEFQRALQLIIDVYADFNLTDYRFRLSYRDPNDTRKYYDNDEMWENAQSMLKAALDEMGVDYFEAEGEAAFYGPKLDIQVKTALGNEETLSTIQLDFLLPERFDLKYIGADGEEHRPVMIHRGVISTMERFTAILIETYKGAFPTWLAPHQVTVIPISNEAHIDYAWEVAKTLRDRGVRADVDDRNEKMQYKIRASQTSKIPYQLIVGDKEMEDKSVNVRRYGSKATHTESVEEFVENILADIARKSCPDAQA.

One can recognise a TGS domain in the interval 1 to 61 (MIKITFPDGA…EEDGSIEIVT (61 aa)). Positions 240–538 (DHRKLGKELD…LIETYKGAFP (299 aa)) are catalytic. Positions 334, 385, and 515 each coordinate Zn(2+).

This sequence belongs to the class-II aminoacyl-tRNA synthetase family. As to quaternary structure, homodimer. The cofactor is Zn(2+).

Its subcellular location is the cytoplasm. It carries out the reaction tRNA(Thr) + L-threonine + ATP = L-threonyl-tRNA(Thr) + AMP + diphosphate + H(+). Its function is as follows. Catalyzes the attachment of threonine to tRNA(Thr) in a two-step reaction: L-threonine is first activated by ATP to form Thr-AMP and then transferred to the acceptor end of tRNA(Thr). Also edits incorrectly charged L-seryl-tRNA(Thr). The chain is Threonine--tRNA ligase from Streptococcus pyogenes serotype M28 (strain MGAS6180).